Consider the following 317-residue polypeptide: Protein PXR1 (317 aa).

The region spanning 25-79 (TTGYGHRIMSAQGWTPGAFLGAPGAAHSSCYTAASASHIRVVLKDDTLGLGARPR) is the G-patch domain. A disordered region spans residues 152–268 (EQANKDDSSD…PNKQSAQQST (117 aa)). Basic and acidic residues predominate over residues 154–170 (ANKDDSSDPKSRQETTQ). A compositionally biased stretch (basic residues) spans 171–182 (KRPKKEKRKEKS). Residues 192–219 (RSISSKPERGTINSANQTSDDESTNIVP) are compositionally biased toward polar residues. Residues 224–236 (SRKKEKKKKSKKR) show a composition bias toward basic residues.

Belongs to the PINX1 family.

It is found in the nucleus. The protein resides in the nucleolus. Functionally, involved in rRNA-processing at A0, A1 and A2 sites and negatively regulates telomerase. In Coccidioides immitis (strain RS) (Valley fever fungus), this protein is Protein PXR1 (PXR1).